We begin with the raw amino-acid sequence, 602 residues long: Protein DGS1, mitochondrial (602 aa).

A run of 2 helical transmembrane segments spans residues 300–320 and 465–485; these read LYWV…IWLL and INFA…MLTV.

As to quaternary structure, component of a mitochondrial large protein complex that contains, at least, MIC60, DGS1, TOM40 (e.g. TOM40-1), TOM20 proteins (e.g. TOM20-2), and petC/RISP.

The protein localises to the mitochondrion outer membrane. Functionally, involved in galactoglycerolipid biosynthesis. Contributes to an intracellular signal that regulates an alternative DGD1-independent galactoglycerolipid biosynthesis pathway in chloroplasts. Being involved in mitochondrial lipid homeostasis, modulates mitochondrion biogenesis and physiology, as well as stress responses. The sequence is that of Protein DGS1, mitochondrial from Arabidopsis thaliana (Mouse-ear cress).